Consider the following 230-residue polypeptide: 6-carboxyhexanoate--CoA ligase (230 aa).

The protein belongs to the BioW family. Homodimer. The cofactor is Mg(2+).

It catalyses the reaction heptanedioate + ATP + CoA = 6-carboxyhexanoyl-CoA + AMP + diphosphate. It functions in the pathway metabolic intermediate metabolism; pimeloyl-CoA biosynthesis; pimeloyl-CoA from pimelate: step 1/1. In terms of biological role, catalyzes the transformation of pimelate into pimeloyl-CoA with concomitant hydrolysis of ATP to AMP. The chain is 6-carboxyhexanoate--CoA ligase from Staphylococcus aureus (strain MRSA252).